Reading from the N-terminus, the 179-residue chain is Sodium/potassium-transporting ATPase subunit beta-1-interacting protein 3 (179 aa).

Helical transmembrane passes span 5 to 22, 35 to 55, 62 to 82, and 151 to 171; these read TGRC…LVAL, APIL…FGTI, IVAY…IICF, and AVQI…ISVI.

It belongs to the NKAIN family. As to quaternary structure, interacts with atp1b1 C-terminus.

Its subcellular location is the cell membrane. The sequence is that of Sodium/potassium-transporting ATPase subunit beta-1-interacting protein 3 (nkain3) from Xenopus laevis (African clawed frog).